Consider the following 1298-residue polypeptide: Outer capsid protein VP1 (1298 aa).

It belongs to the aquareoviridae outer capsid VP1 protein family.

It is found in the virion. It carries out the reaction a 5'-end diphospho-ribonucleoside in mRNA + GTP + H(+) = a 5'-end (5'-triphosphoguanosine)-ribonucleoside in mRNA + diphosphate. The catalysed reaction is a 5'-end (5'-triphosphoguanosine)-ribonucleoside in mRNA + S-adenosyl-L-methionine = a 5'-end (N(7)-methyl 5'-triphosphoguanosine)-ribonucleoside in mRNA + S-adenosyl-L-homocysteine. In terms of biological role, outer capsid protein involved in mRNA capping. Catalyzes the last 3 enzymatic activities for formation of the 5' cap structure on the viral plus-strand transcripts, namely the RNA guanylyltransferase, RNA-7N- and RNA-2'O-methyltransferase activities. The protein is Outer capsid protein VP1 (S1) of Ctenopharyngodon idella (Grass carp).